The primary structure comprises 222 residues: Cytidylate kinase (222 aa).

7 to 15 is a binding site for ATP; that stretch reads GPSASGKSS.

It belongs to the cytidylate kinase family. Type 1 subfamily.

It localises to the cytoplasm. The enzyme catalyses CMP + ATP = CDP + ADP. The catalysed reaction is dCMP + ATP = dCDP + ADP. The chain is Cytidylate kinase from Borrelia turicatae (strain 91E135).